Here is a 174-residue protein sequence, read N- to C-terminus: MATEVQFACALVVLLGCGYAGTPTPSKSTLIYNSQNCTTYPSIENGQSSLYYNGSWFIRYEFNCSSGYELQGWPYTTCIFWPKNGTIWTNGPPSCVKLNITTTLMPTSTSTTPVTTGTFPDPQNTTHPTHHTVKPTRRPINLLRFGYTPWAIITLVVIILLVVWIVNCCMGPMF.

A signal peptide spans 1–20 (MATEVQFACALVVLLGCGYA). The Sushi domain occupies 35 to 97 (QNCTTYPSIE…WTNGPPSCVK (63 aa)). 2 disulfides stabilise this stretch: Cys37–Cys78 and Cys64–Cys95. Residues 108–127 (STSTTPVTTGTFPDPQNTTH) show a composition bias toward low complexity. Positions 108 to 133 (STSTTPVTTGTFPDPQNTTHPTHHTV) are disordered. A helical membrane pass occupies residues 145 to 165 (FGYTPWAIITLVVIILLVVWI).

It is found in the host membrane. The chain is SUSHI domain-containing protein E3 (E3) from Equine herpesvirus 2 (strain 86/87) (EHV-2).